The following is a 368-amino-acid chain: C2H2 type master regulator of conidiophore development BrlA (368 aa).

Residues 268-292 form a C2H2-type 1; degenerate zinc finger; that stretch reads CKCDYPGCHKAFRRNEHLKRHKQTF. The segment at 300 to 323 adopts a C2H2-type 2 zinc-finger fold; sequence FSCEFCGKDQFNRQDNLNNHRKLH. Positions 338–368 are disordered; that stretch reads AAVPIIEQEERSRKRRAPPKSKSADKRVDDY. Basic and acidic residues predominate over residues 359-368; it reads KSADKRVDDY.

Its subcellular location is the nucleus. Its function is as follows. BrlA, abaA and wetA are pivotal regulators of conidiophore development and conidium maturation. They act individually and together to regulate their own expression and that of numerous other sporulation-specific genes. BrlA, abaA and wetA act together to positively regulate the expression of the Pks1 gene cluster that mediates the biosynthesis of an anthraquinone derivative pigment that contributes to conidial pigmentation that provides protection from UV radiation, heat and cold stress. The protein is C2H2 type master regulator of conidiophore development BrlA of Metarhizium robertsii (strain ARSEF 23 / ATCC MYA-3075) (Metarhizium anisopliae (strain ARSEF 23)).